A 377-amino-acid chain; its full sequence is Palmitoyltransferase PFA4 (377 aa).

The Cytoplasmic segment spans residues 1–9 (MAIKLKNRW). The helical transmembrane segment at 10–30 (LGVAIPAFLVALIGYGSHYFI) threads the bilayer. Residues 31–122 (LSNFLSWNEQ…NCVGHSNFPH (92 aa)) are Lumenal-facing. Residues 78–128 (NYCKKCRVYKPERAHHCKTCNQCVLAMDHHCPWTLNCVGHSNFPHFMRFLF) enclose the DHHC domain. Cys108 (S-palmitoyl cysteine intermediate) is an active-site residue. A helical membrane pass occupies residues 123–143 (FMRFLFWVIFSTAYLLFLLIG). The Cytoplasmic segment spans residues 144–163 (RIYLLWSIRHTAFHHRSTSE). A helical transmembrane segment spans residues 164–184 (IIFICIMTPMDAFVLLTVSSL). The Lumenal segment spans residues 185–377 (LGRCIYNQCL…SDFGVDTELE (193 aa)).

Belongs to the DHHC palmitoyltransferase family. PFA4 subfamily.

Its subcellular location is the endoplasmic reticulum membrane. It carries out the reaction L-cysteinyl-[protein] + hexadecanoyl-CoA = S-hexadecanoyl-L-cysteinyl-[protein] + CoA. In terms of biological role, mediates the reversible addition of palmitate to target proteins, thereby regulating their membrane association and biological function. In Kluyveromyces lactis (strain ATCC 8585 / CBS 2359 / DSM 70799 / NBRC 1267 / NRRL Y-1140 / WM37) (Yeast), this protein is Palmitoyltransferase PFA4.